The sequence spans 209 residues: Large ribosomal subunit protein bL25 (209 aa).

Residues 190–209 (LKSEEAASEGAAEEEAKDGE) are disordered. Residues 200–209 (AAEEEAKDGE) are compositionally biased toward acidic residues.

The protein belongs to the bacterial ribosomal protein bL25 family. CTC subfamily. Part of the 50S ribosomal subunit; part of the 5S rRNA/L5/L18/L25 subcomplex. Contacts the 5S rRNA. Binds to the 5S rRNA independently of L5 and L18.

This is one of the proteins that binds to the 5S RNA in the ribosome where it forms part of the central protuberance. The polypeptide is Large ribosomal subunit protein bL25 (Brucella anthropi (strain ATCC 49188 / DSM 6882 / CCUG 24695 / JCM 21032 / LMG 3331 / NBRC 15819 / NCTC 12168 / Alc 37) (Ochrobactrum anthropi)).